Reading from the N-terminus, the 557-residue chain is Isocitrate lyase (557 aa).

At T53 the chain carries Phosphothreonine. 106–108 is a binding site for substrate; sequence SGW. D179 provides a ligand contact to Mg(2+). C217 serves as the catalytic Proton acceptor. Substrate contacts are provided by residues 218–219, R254, 437–441, and T471; these read GH and NLSPS.

Belongs to the isocitrate lyase/PEP mutase superfamily. Isocitrate lyase family. As to quaternary structure, homotetramer. Mg(2+) is required as a cofactor. Phosphorylated in response to elevated glucose levels, leading first to reversible inactivation of the enzyme (short-term inactivation), and at a later stage to proteolytic degradation of the protein (long-term inactivation).

Its subcellular location is the cytoplasm. The protein resides in the secreted. The protein localises to the extracellular space. It localises to the extracellular matrix. It is found in the vacuole. It catalyses the reaction D-threo-isocitrate = glyoxylate + succinate. The catalysed reaction is (2S,3R)-3-hydroxybutane-1,2,3-tricarboxylate = pyruvate + succinate. Its pathway is carbohydrate metabolism; glyoxylate cycle; (S)-malate from isocitrate: step 1/2. Phosphorylated and inactivated after addition of glucose to the cell culture (repressing conditions). In terms of biological role, catalyzes the formation of succinate and glyoxylate from isocitrate, a key step of the glyoxylate cycle, which operates as an anaplerotic route for replenishing the tricarboxylic acid cycle. Required for growth on ethanol or acetate, but dispensable when fermentable carbon sources are available. Also acts on 2-methylisocitrate. This Saccharomyces cerevisiae (strain ATCC 204508 / S288c) (Baker's yeast) protein is Isocitrate lyase.